We begin with the raw amino-acid sequence, 291 residues long: G1/S-specific cyclin-D1 (291 aa).

Threonine 282 carries the post-translational modification Phosphothreonine.

It belongs to the cyclin family. Cyclin D subfamily. Interacts with the CDK4 and CDK6 protein kinases to form a serine/threonine kinase holoenzyme complex. The cyclin subunit imparts substrate specificity to the complex. In terms of processing, phosphorylation at Thr-282 by MAP kinases is required for ubiquitination and degradation by the DCX(AMBRA1) complex. Ubiquitinated by the DCX(AMBRA1) complex during the transition from G1 to S cell phase, leading to its degradation. The DCX(AMBRA1) complex represents the major regulator of CCND1 stability during the G1/S transition.

It is found in the nucleus. Its subcellular location is the cytoplasm. Its function is as follows. Regulatory component of the cyclin D1-CDK4 (DC) complex that phosphorylates and inhibits members of the retinoblastoma (RB) protein family including RB1 and regulates the cell-cycle during G(1)/S transition. Phosphorylation of RB1 allows dissociation of the transcription factor E2F from the RB/E2F complex and the subsequent transcription of E2F target genes which are responsible for the progression through the G(1) phase. Hypophosphorylates RB1 in early G(1) phase. Cyclin D-CDK4 complexes are major integrators of various mitogenenic and antimitogenic signals. The chain is G1/S-specific cyclin-D1 (ccnd1) from Danio rerio (Zebrafish).